Here is a 281-residue protein sequence, read N- to C-terminus: NAD kinase (281 aa).

The active-site Proton acceptor is the aspartate 61. Residues 61-62, 134-135, arginine 145, aspartate 164, 175-180, and glutamine 234 contribute to the NAD(+) site; these read DG, ND, and TAYSLS.

This sequence belongs to the NAD kinase family. A divalent metal cation is required as a cofactor.

It is found in the cytoplasm. The enzyme catalyses NAD(+) + ATP = ADP + NADP(+) + H(+). Its function is as follows. Involved in the regulation of the intracellular balance of NAD and NADP, and is a key enzyme in the biosynthesis of NADP. Catalyzes specifically the phosphorylation on 2'-hydroxyl of the adenosine moiety of NAD to yield NADP. The protein is NAD kinase of Clostridium botulinum (strain Kyoto / Type A2).